Here is a 506-residue protein sequence, read N- to C-terminus: Anaerobic nitric oxide reductase transcription regulator NorR (506 aa).

At Asp57 the chain carries 4-aspartylphosphate. One can recognise a Sigma-54 factor interaction domain in the interval 187–416; it reads MIGLSPAMTQ…LEHAIHRAVV (230 aa). ATP contacts are provided by residues 215–222 and 278–287; these read GETGTGKE and ADNGTLFLDE. Residues 481-500 constitute a DNA-binding region (H-T-H motif); the sequence is WAASARALETDVANLHRLAK.

It functions in the pathway nitrogen metabolism; nitric oxide reduction. In terms of biological role, required for the expression of anaerobic nitric oxide (NO) reductase, acts as a transcriptional activator for at least the norVW operon. Activation also requires sigma-54. This chain is Anaerobic nitric oxide reductase transcription regulator NorR, found in Salmonella newport (strain SL254).